We begin with the raw amino-acid sequence, 209 residues long: Probable GTP-binding protein EngB (209 aa).

In terms of domain architecture, EngB-type G spans 22-198 (TPLEIAFVGR…NRTVGSWFDA (177 aa)). Positions 37 and 59 each coordinate Mg(2+).

The protein belongs to the TRAFAC class TrmE-Era-EngA-EngB-Septin-like GTPase superfamily. EngB GTPase family. Mg(2+) serves as cofactor.

Its function is as follows. Necessary for normal cell division and for the maintenance of normal septation. The protein is Probable GTP-binding protein EngB of Neisseria gonorrhoeae (strain ATCC 700825 / FA 1090).